The following is a 387-amino-acid chain: 1-deoxy-D-xylulose 5-phosphate reductoisomerase (387 aa).

NADPH is bound by residues Thr-11, Gly-12, Ser-13, Ile-14, Gly-37, Arg-39, and Asn-123. Lys-124 lines the 1-deoxy-D-xylulose 5-phosphate pocket. Glu-125 is an NADPH binding site. A Mn(2+)-binding site is contributed by Asp-147. Ser-148, Glu-149, Ser-173, and His-196 together coordinate 1-deoxy-D-xylulose 5-phosphate. Mn(2+) is bound at residue Glu-149. Gly-202 contributes to the NADPH binding site. Residues Ser-209, Asn-214, Lys-215, and Glu-218 each contribute to the 1-deoxy-D-xylulose 5-phosphate site. Glu-218 contacts Mn(2+).

This sequence belongs to the DXR family. Mg(2+) is required as a cofactor. It depends on Mn(2+) as a cofactor.

It carries out the reaction 2-C-methyl-D-erythritol 4-phosphate + NADP(+) = 1-deoxy-D-xylulose 5-phosphate + NADPH + H(+). It participates in isoprenoid biosynthesis; isopentenyl diphosphate biosynthesis via DXP pathway; isopentenyl diphosphate from 1-deoxy-D-xylulose 5-phosphate: step 1/6. Its function is as follows. Catalyzes the NADPH-dependent rearrangement and reduction of 1-deoxy-D-xylulose-5-phosphate (DXP) to 2-C-methyl-D-erythritol 4-phosphate (MEP). This is 1-deoxy-D-xylulose 5-phosphate reductoisomerase from Corynebacterium diphtheriae (strain ATCC 700971 / NCTC 13129 / Biotype gravis).